The chain runs to 609 residues: Alpha-fetoprotein (609 aa).

The first 18 residues, 1-18 (MKWVVSILLIFLLNSTES), serve as a signal peptide directing secretion. 3 Albumin domains span residues 19–210 (RTMH…ATIT), 211–402 (KELR…EELQ), and 403–601 (KYIQ…QLIS). Histidine 22 is a binding site for Cu(2+). Cystine bridges form between cysteine 99–cysteine 114, cysteine 113–cysteine 124, cysteine 148–cysteine 193, cysteine 192–cysteine 201, cysteine 224–cysteine 270, cysteine 269–cysteine 277, cysteine 289–cysteine 303, and cysteine 302–cysteine 313. 2 positions are modified to phosphoserine: serine 111 and serine 115. A glycan (N-linked (GlcNAc...) asparagine) is linked at asparagine 251. Serine 344 is subject to Phosphoserine. Disulfide bonds link cysteine 384/cysteine 393, cysteine 416/cysteine 462, cysteine 461/cysteine 472, cysteine 485/cysteine 501, cysteine 500/cysteine 511, cysteine 538/cysteine 583, and cysteine 582/cysteine 591.

Belongs to the ALB/AFP/VDB family. In terms of assembly, dimeric and trimeric forms have been found in addition to the monomeric form. In terms of processing, sulfated. In terms of tissue distribution, plasma.

The protein localises to the secreted. In terms of biological role, binds copper, nickel, and fatty acids as well as, and bilirubin less well than, serum albumin. The sequence is that of Alpha-fetoprotein (AFP) from Equus caballus (Horse).